We begin with the raw amino-acid sequence, 98 residues long: DNA-binding protein Fis (98 aa).

A DNA-binding region (H-T-H motif) is located at residues 74 to 93; that stretch reads QTKAANMMGINRGTLRKKLK.

This sequence belongs to the transcriptional regulatory Fis family. In terms of assembly, homodimer.

In terms of biological role, activates ribosomal RNA transcription. Plays a direct role in upstream activation of rRNA promoters. In Aliivibrio fischeri (strain ATCC 700601 / ES114) (Vibrio fischeri), this protein is DNA-binding protein Fis.